Reading from the N-terminus, the 317-residue chain is tRNA uridine(34) hydroxylase (317 aa).

The Rhodanese domain maps to 129-223 (TDPEVLLIDT…YLEEVPEQES (95 aa)). Residue Cys183 is the Cysteine persulfide intermediate of the active site. The interval 298–317 (AKARNQPHPIGRNYRLPSEA) is disordered.

It belongs to the TrhO family.

It catalyses the reaction uridine(34) in tRNA + AH2 + O2 = 5-hydroxyuridine(34) in tRNA + A + H2O. Functionally, catalyzes oxygen-dependent 5-hydroxyuridine (ho5U) modification at position 34 in tRNAs. The sequence is that of tRNA uridine(34) hydroxylase from Pseudomonas syringae pv. tomato (strain ATCC BAA-871 / DC3000).